We begin with the raw amino-acid sequence, 431 residues long: 3-isopropylmalate dehydratase large subunit (431 aa).

Positions 300, 360, and 363 each coordinate [4Fe-4S] cluster.

The protein belongs to the aconitase/IPM isomerase family. LeuC type 2 subfamily. In terms of assembly, heterodimer of LeuC and LeuD. Requires [4Fe-4S] cluster as cofactor.

It carries out the reaction (2R,3S)-3-isopropylmalate = (2S)-2-isopropylmalate. Its pathway is amino-acid biosynthesis; L-leucine biosynthesis; L-leucine from 3-methyl-2-oxobutanoate: step 2/4. Catalyzes the isomerization between 2-isopropylmalate and 3-isopropylmalate, via the formation of 2-isopropylmaleate. This is 3-isopropylmalate dehydratase large subunit from Sulfurihydrogenibium sp. (strain YO3AOP1).